A 477-amino-acid polypeptide reads, in one-letter code: Adenosylhomocysteinase (477 aa).

Positions 63, 142, and 202 each coordinate substrate. NAD(+) is bound at residue 203 to 205 (TTT). Substrate is bound by residues lysine 232 and aspartate 236. NAD(+) contacts are provided by residues asparagine 237, 266–271 (GYGDVG), glutamate 289, asparagine 324, 345–347 (IGH), and asparagine 390.

Belongs to the adenosylhomocysteinase family. NAD(+) serves as cofactor.

It is found in the cytoplasm. It catalyses the reaction S-adenosyl-L-homocysteine + H2O = L-homocysteine + adenosine. It functions in the pathway amino-acid biosynthesis; L-homocysteine biosynthesis; L-homocysteine from S-adenosyl-L-homocysteine: step 1/1. Its function is as follows. May play a key role in the regulation of the intracellular concentration of adenosylhomocysteine. The polypeptide is Adenosylhomocysteinase (Leptothrix cholodnii (strain ATCC 51168 / LMG 8142 / SP-6) (Leptothrix discophora (strain SP-6))).